The primary structure comprises 185 residues: GTP-dependent dephospho-CoA kinase (185 aa).

Aspartate 50, valine 52, aspartate 73, lysine 75, and glutamate 128 together coordinate GTP.

Belongs to the GTP-dependent DPCK family.

The enzyme catalyses 3'-dephospho-CoA + GTP = GDP + CoA + H(+). The protein operates within cofactor biosynthesis; coenzyme A biosynthesis. Functionally, catalyzes the GTP-dependent phosphorylation of the 3'-hydroxyl group of dephosphocoenzyme A to form coenzyme A (CoA). The chain is GTP-dependent dephospho-CoA kinase from Aeropyrum pernix (strain ATCC 700893 / DSM 11879 / JCM 9820 / NBRC 100138 / K1).